The following is a 226-amino-acid chain: Histone H1.5 (226 aa).

Residues 1 to 16 show a composition bias toward low complexity; the sequence is MSETAPAETATPAPVE. The tract at residues 1 to 44 is disordered; that stretch reads MSETAPAETATPAPVEKSPAKKKATKKAAGAGAAKRKATGPPVS. At S2 the chain carries N-acetylserine; partial. Position 2 is a phosphoserine (S2). T11 bears the Phosphothreonine; by GSK3 mark. K17 carries the N6-acetyllysine modification. S18 carries the post-translational modification Phosphoserine. The residue at position 27 (K27) is an N6-methyllysine. K37 carries the post-translational modification N6-(beta-hydroxybutyryl)lysine; alternate. K37 is subject to N6-succinyllysine; alternate. At T39 the chain carries Phosphothreonine. Residues 39–112 enclose the H15 domain; that stretch reads TGPPVSELIT…GASGSFKLNK (74 aa). K49 is modified (N6-acetyllysine). At K55 the chain carries N6-(beta-hydroxybutyryl)lysine. Citrulline is present on R57. Position 67 is an N6-(beta-hydroxybutyryl)lysine (K67). K78 bears the N6-acetyllysine mark. K88, K93, and K109 each carry N6-(beta-hydroxybutyryl)lysine. Positions 98-226 are disordered; it reads QTKGTGASGS…KAKKAAAKKK (129 aa). The segment covering 122-133 has biased composition (basic residues); the sequence is KAKKAGAAKAKK. Phosphothreonine is present on residues T138 and T155. Residues 140–161 are compositionally biased toward basic residues; the sequence is KKAKKAAGAKKAVKKTPKKAKK. K168 carries the post-translational modification N6-acetyllysine. Over residues 169–187 the composition is skewed to basic residues; sequence KVAKSPKKAKAAAKPKKAT. Phosphoserine is present on residues S173 and S189. Basic residues predominate over residues 194–226; sequence KAVKPKAAKPKAAKPKAAKPKAAKAKKAAAKKK.

It belongs to the histone H1/H5 family. Interacts with MSX1. In terms of processing, H1 histones are progressively phosphorylated during the cell cycle, becoming maximally phosphorylated during late G2 phase and M phase, and being dephosphorylated sharply thereafter. Phosphorylated at Thr-11 by GSK3B during mitosis in prometaphase and dephosphorylated in telophase. Citrullination at Arg-57 (H1R54ci) by PADI4 takes place within the DNA-binding site of H1 and results in its displacement from chromatin and global chromatin decondensation, thereby promoting pluripotency and stem cell maintenance. In terms of tissue distribution, ubiquitous. Expressed in the majority of the cell lines tested and in testis.

The protein localises to the nucleus. The protein resides in the chromosome. Its function is as follows. Histone H1 protein binds to linker DNA between nucleosomes forming the macromolecular structure known as the chromatin fiber. Histones H1 are necessary for the condensation of nucleosome chains into higher-order structured fibers. Also acts as a regulator of individual gene transcription through chromatin remodeling, nucleosome spacing and DNA methylation. The chain is Histone H1.5 from Homo sapiens (Human).